The primary structure comprises 79 residues: Peptide Im-5 (79 aa).

The N-terminal stretch at 1–23 (MKYRKQLLVLFFAYFLVVNESEA) is a signal peptide. Residues 49–79 (RALMKRDLQDRMDPYQRNLKLDRYLKQLALD) constitute a propeptide that is removed on maturation.

Belongs to the non-disulfide-bridged peptide (NDBP) superfamily. Medium-length antimicrobial peptide (group 3) family. In terms of tissue distribution, expressed by the venom gland.

It is found in the secreted. The protein localises to the target cell membrane. Functionally, antimicrobial peptide that may act by disrupting the integrity of the bacterial cell membrane. Has antibacterial activity against Gram-negative bacterium E.coli NBRC 3972 (MIC=10 uM) and against Gram-positive bacteria S.aureus NBRC 13276 (MIC=2.5-5 uM) and B.subtilis NBRC 3009 (MIC=0.5-1 uM). Also shows potent activity against antibiotic-sensitive and -resistant Acinetobacter baumannii (MIC=1.8-3.6 uM). Shows cytolytic activity against human and sheep erythrocytes. Toxic to cricket A.domestica. In Isometrus maculatus (Lesser brown scorpion), this protein is Peptide Im-5.